Here is a 499-residue protein sequence, read N- to C-terminus: NADH-quinone oxidoreductase subunit 14 (499 aa).

14 consecutive transmembrane segments (helical) span residues isoleucine 9 to leucine 29, threonine 37 to asparagine 57, phenylalanine 76 to methionine 96, phenylalanine 104 to glycine 124, leucine 126 to methionine 146, phenylalanine 161 to phenylalanine 181, alanine 196 to phenylalanine 216, proline 235 to alanine 255, tryptophan 269 to isoleucine 289, serine 301 to valine 321, methionine 324 to serine 344, alanine 369 to phenylalanine 389, glycine 402 to leucine 422, and tyrosine 446 to valine 466.

The protein belongs to the complex I subunit 2 family. As to quaternary structure, NDH-1 is composed of at least 14 different subunits, Nqo1 to Nqo14. The complex has a L-shaped structure, with the hydrophobic arm (subunits Nqo7, Nqo8, Nqo10 to Nqo14) embedded in the inner membrane and the hydrophilic peripheral arm (subunits Nqo1 to Nqo6, Nqo9) protruding into the bacterial cytoplasm. The hydrophilic domain contains all the redox centers.

It localises to the cell inner membrane. The enzyme catalyses a quinone + NADH + 5 H(+)(in) = a quinol + NAD(+) + 4 H(+)(out). NDH-1 shuttles electrons from NADH, via FMN and iron-sulfur (Fe-S) centers, to quinones in the respiratory chain. The immediate electron acceptor for the enzyme in this species is believed to be ubiquinone. Couples the redox reaction to proton translocation (for every two electrons transferred, four hydrogen ions are translocated across the cytoplasmic membrane), and thus conserves the redox energy in a proton gradient. The polypeptide is NADH-quinone oxidoreductase subunit 14 (Paracoccus denitrificans).